Reading from the N-terminus, the 395-residue chain is Phosphoprotein (395 aa).

Positions asparagine 178–alanine 217 are disordered. The span at alanine 206–alanine 217 shows a compositional bias: low complexity. Residues glutamate 220–serine 283 are multimerization.

Belongs to the rubulavirus/avulavirus P protein family. In terms of assembly, homotetramer. Interacts (via multimerization domain) with polymerase L; this interaction forms the polymerase L-P complex. Interacts (via N-terminus) with N0 (via Ncore); this interaction allows P to chaperon N0 to avoid N polymerization before encapsidation. Interacts (via C-terminus) with N-RNA template; this interaction positions the polymerase on the template for both transcription and replication. Interacts with host ARHGAP26; this interaction promotes host RHOA activation. Interacts with host KPNA1 and KPNA6.

It localises to the host cytoplasm. Functionally, essential cofactor of the RNA polymerase L that plays a central role in the transcription and replication by forming the polymerase complex with RNA polymerase L and recruiting L to the genomic N-RNA template for RNA synthesis. Also plays a central role in the encapsidation of nascent RNA chains by forming the encapsidation complex with the nucleocapsid protein N (N-P complex). Acts as a chaperone for newly synthesized free N protein, so-called N0, allowing encapsidation of nascent RNA chains during replication. The nucleoprotein protein N prevents excessive phosphorylation of P, which leads to down-regulation of viral transcription/ replication. Participates, together with N, in the formation of viral factories (viroplasms), which are large inclusions in the host cytoplasm where replication takes place. Also plays a role in viral growth by promoting host RHOA activation and thus actin formation via ARHGAP26 inhibition. The protein is Phosphoprotein (P/V) of Homo sapiens (Human).